Consider the following 491-residue polypeptide: Argininosuccinate lyase (491 aa).

Belongs to the lyase 1 family. Argininosuccinate lyase subfamily.

Its subcellular location is the cytoplasm. It catalyses the reaction 2-(N(omega)-L-arginino)succinate = fumarate + L-arginine. The protein operates within amino-acid biosynthesis; L-arginine biosynthesis; L-arginine from L-ornithine and carbamoyl phosphate: step 3/3. The polypeptide is Argininosuccinate lyase (Methanococcoides burtonii (strain DSM 6242 / NBRC 107633 / OCM 468 / ACE-M)).